The chain runs to 282 residues: Serine/threonine-protein kinase Aurora-2 (282 aa).

Residues 19–270 form the Protein kinase domain; that stretch reads FDIGKPLGRG…LHKLLEHPWI (252 aa). Residues 25–33 and lysine 48 contribute to the ATP site; that span reads LGRGKFGHV. Aspartate 142 (proton acceptor) is an active-site residue. Residue serine 164 is modified to Phosphoserine. Threonine 173 is subject to Phosphothreonine.

It belongs to the protein kinase superfamily. Ser/Thr protein kinase family. Aurora subfamily. In terms of processing, phosphorylation at Thr-173 may regulate activity and degradation of AUR2 in a cell cycle dependent manner. As to expression, abundant in roots, flowers and flower buds, low or absent in expanded leaves, stems and siliques.

Its subcellular location is the nucleus membrane. It localises to the cytoplasm. The protein localises to the cytoskeleton. It is found in the spindle. The protein resides in the spindle pole. The enzyme catalyses L-seryl-[protein] + ATP = O-phospho-L-seryl-[protein] + ADP + H(+). It carries out the reaction L-threonyl-[protein] + ATP = O-phospho-L-threonyl-[protein] + ADP + H(+). In terms of biological role, phosphorylates specifically 'Ser-10' of histone H3 in vitro. Associates with cytoskeletal structures that are necessary for cytokinesis and with the microtubule spindle. Might colocalize with gamma-tubulin and function in microtubule organizing centers (MTOCs). This chain is Serine/threonine-protein kinase Aurora-2 (AUR2), found in Arabidopsis thaliana (Mouse-ear cress).